Here is a 98-residue protein sequence, read N- to C-terminus: Parvalbumin beta 1 (98 aa).

Serine 1 is subject to N-acetylserine. 2 EF-hand domains span residues 32–67 (KIGLAGKKVFAIIDQDKSDFVEEDELKLFLQVFSAG) and 67–98 (GARALTDAETKAGDSDGDGKIGVDEFAQMIKG). Ca(2+)-binding residues include aspartate 45, aspartate 47, serine 49, phenylalanine 51, glutamate 53, glutamate 56, aspartate 80, aspartate 82, aspartate 84, lysine 86, and glutamate 91.

Belongs to the parvalbumin family.

In muscle, parvalbumin is thought to be involved in relaxation after contraction. It binds two calcium ions. In Macruronus magellanicus (Patagonian grenadier), this protein is Parvalbumin beta 1.